The sequence spans 32 residues: Small ribosomal subunit protein uS19 (32 aa).

The protein belongs to the universal ribosomal protein uS19 family.

In terms of biological role, protein S19 forms a complex with S13 that binds strongly to the 16S ribosomal RNA. The polypeptide is Small ribosomal subunit protein uS19 (rpsS) (Yersinia enterocolitica).